The chain runs to 486 residues: MEKWWLNSMLSNEDLGRRCGLSASLGPIGNTSGSEEPIINDSEKNVNSWSGRGSYSCSNVDYLFNLGGVKDVWSLISGETFWVRDSNGDSYSIYFDIENKIFEIDTDSYFLGELESLFSSYLNLNNGSKSYNRYYDHYVYDTRHSWKSHINSCIDSYIRSETNMDSCIPNGSNNSSDNYIYSYICSDSERGSDRGSSNLKTSGVSDSDFGRHNDLDRNKRYRHLWVQCENCYGLNYKKFFSSKMNICEQCGYHLKMSSSDRIELLIDPGTWDPMDENMVSMDPIEFHSEEDPYRDRINSYQIETGLAEAVQTGIGKLNGIPIAIGVMDFKFMGGSMGSVVGEKITRLIEYATDRSLPVIMVCASGGARMQEGSLSLMQMAKISSALYNYQSNKKLFYVSILTSPTTGGVTASFGMLGDIIIAEPNAYIAFAGKRVIEQTLKKTVPEGSQVAEYLFNKGLFDPIVPRNLLKGVPSELFQFHGFFPRP.

Residues 224-486 (LWVQCENCYG…FQFHGFFPRP (263 aa)) form the CoA carboxyltransferase N-terminal domain. Residues cysteine 228, cysteine 231, cysteine 247, and cysteine 250 each contribute to the Zn(2+) site. A C4-type zinc finger spans residues 228–250 (CENCYGLNYKKFFSSKMNICEQC).

This sequence belongs to the AccD/PCCB family. Acetyl-CoA carboxylase is a heterohexamer composed of biotin carboxyl carrier protein, biotin carboxylase and 2 subunits each of ACCase subunit alpha and ACCase plastid-coded subunit beta (accD). The cofactor is Zn(2+).

It localises to the plastid. Its subcellular location is the chloroplast stroma. The enzyme catalyses N(6)-carboxybiotinyl-L-lysyl-[protein] + acetyl-CoA = N(6)-biotinyl-L-lysyl-[protein] + malonyl-CoA. The protein operates within lipid metabolism; malonyl-CoA biosynthesis; malonyl-CoA from acetyl-CoA: step 1/1. Component of the acetyl coenzyme A carboxylase (ACC) complex. Biotin carboxylase (BC) catalyzes the carboxylation of biotin on its carrier protein (BCCP) and then the CO(2) group is transferred by the transcarboxylase to acetyl-CoA to form malonyl-CoA. The chain is Acetyl-coenzyme A carboxylase carboxyl transferase subunit beta, chloroplastic from Nymphaea alba (White water-lily).